The chain runs to 512 residues: Maturase K (512 aa).

Belongs to the intron maturase 2 family. MatK subfamily.

Its subcellular location is the plastid. The protein localises to the chloroplast. Its function is as follows. Usually encoded in the trnK tRNA gene intron. Probably assists in splicing its own and other chloroplast group II introns. This is Maturase K from Daucus carota (Wild carrot).